The sequence spans 107 residues: Large ribosomal subunit protein uL24 (107 aa).

It belongs to the universal ribosomal protein uL24 family. In terms of assembly, part of the 50S ribosomal subunit.

Its function is as follows. One of two assembly initiator proteins, it binds directly to the 5'-end of the 23S rRNA, where it nucleates assembly of the 50S subunit. One of the proteins that surrounds the polypeptide exit tunnel on the outside of the subunit. The chain is Large ribosomal subunit protein uL24 from Thermotoga neapolitana (strain ATCC 49049 / DSM 4359 / NBRC 107923 / NS-E).